Consider the following 828-residue polypeptide: Periplasmic nitrate reductase (828 aa).

The tat-type signal signal peptide spans 1–31 (MKLSRRSFMKANAVAAAAAAAGLSVPGVARA). The region spanning 39 to 95 (IKWDKAPCRFCGTGCGVLVGTQQGRVVACQGDPDAPVNRGLNCIKGYFLPKIMYGKD) is the 4Fe-4S Mo/W bis-MGD-type domain. C46, C49, C53, and C81 together coordinate [4Fe-4S] cluster. Residues K83, Q150, N175, C179, 212–219 (WGANMAEM), 243–247 (STYQH), 262–264 (QSD), M372, Q376, N482, 508–509 (SD), K531, D558, and 718–727 (TGRVLEHWHT) contribute to the Mo-bis(molybdopterin guanine dinucleotide) site. F794 serves as a coordination point for substrate. Mo-bis(molybdopterin guanine dinucleotide)-binding residues include N802 and K819.

It belongs to the prokaryotic molybdopterin-containing oxidoreductase family. NasA/NapA/NarB subfamily. As to quaternary structure, component of the periplasmic nitrate reductase NapAB complex composed of NapA and NapB. [4Fe-4S] cluster is required as a cofactor. Mo-bis(molybdopterin guanine dinucleotide) serves as cofactor. In terms of processing, predicted to be exported by the Tat system. The position of the signal peptide cleavage has not been experimentally proven.

It localises to the periplasm. It carries out the reaction 2 Fe(II)-[cytochrome] + nitrate + 2 H(+) = 2 Fe(III)-[cytochrome] + nitrite + H2O. Its function is as follows. Catalytic subunit of the periplasmic nitrate reductase complex NapAB. Receives electrons from NapB and catalyzes the reduction of nitrate to nitrite. This Escherichia coli (strain K12 / MC4100 / BW2952) protein is Periplasmic nitrate reductase.